The sequence spans 114 residues: Iron-sulfur cluster insertion protein ErpA (114 aa).

The iron-sulfur cluster site is built by Cys-42, Cys-106, and Cys-108.

This sequence belongs to the HesB/IscA family. As to quaternary structure, homodimer. Iron-sulfur cluster serves as cofactor.

Required for insertion of 4Fe-4S clusters for at least IspG. The sequence is that of Iron-sulfur cluster insertion protein ErpA from Klebsiella pneumoniae subsp. pneumoniae (strain ATCC 700721 / MGH 78578).